The chain runs to 72 residues: MSLEILDQLEGKIKQAVETIQLLQLEVEELKEKNQQAQQANDELRSENEQLKGEHNNWQERLRSLLGQIDNV.

Residues 2–72 (SLEILDQLEG…RSLLGQIDNV (71 aa)) are a coiled coil. Residues 34 to 57 (NQQAQQANDELRSENEQLKGEHNN) are disordered. A compositionally biased stretch (basic and acidic residues) spans 42 to 57 (DELRSENEQLKGEHNN).

This sequence belongs to the ZapB family. In terms of assembly, homodimer. The ends of the coiled-coil dimer bind to each other, forming polymers. Interacts with FtsZ.

The protein resides in the cytoplasm. Functionally, non-essential, abundant cell division factor that is required for proper Z-ring formation. It is recruited early to the divisome by direct interaction with FtsZ, stimulating Z-ring assembly and thereby promoting cell division earlier in the cell cycle. Its recruitment to the Z-ring requires functional FtsA or ZipA. In Mannheimia succiniciproducens (strain KCTC 0769BP / MBEL55E), this protein is Cell division protein ZapB.